The chain runs to 315 residues: 1,2-dihydroxy-3,5-cyclohexadiene-1,4-dicarboxylate dehydrogenase (315 aa).

A divalent metal cation contacts are provided by His-159, His-203, and His-255.

Belongs to the PdxA family.

The catalysed reaction is (3S,4R)-3,4-dihydroxycyclohexa-1,5-diene-1,4-dicarboxylate + NAD(+) = 3,4-dihydroxybenzoate + CO2 + NADH. Its function is as follows. Involved in the degradation of terephthalate (TPA) via the protocatechuate (PCA) 4,5-cleavage pathway. Catalyzes the dehydrogenation of 1,2-dihydroxy-3,5-cyclohexadiene-1,4-dicarboxylate (DCD) to yield protocatechuate (PCA). This chain is 1,2-dihydroxy-3,5-cyclohexadiene-1,4-dicarboxylate dehydrogenase (tphBI), found in Comamonas sp.